The following is a 531-amino-acid chain: Beta-hexosaminidase subunit beta (531 aa).

Positions 1–21 are cleaved as a signal peptide; sequence MEVLPGLLRLLAALVVAERWA. An intrachain disulfide couples cysteine 67 to cysteine 111. N-linked (GlcNAc...) asparagine glycans are attached at residues asparagine 120, asparagine 164, and asparagine 301. 2 cysteine pairs are disulfide-bonded: cysteine 283/cysteine 334 and cysteine 508/cysteine 525. The Proton donor role is filled by glutamate 329.

The protein belongs to the glycosyl hydrolase 20 family. In terms of assembly, there are 3 forms of beta-hexosaminidase: hexosaminidase A is a heterodimer composed of one subunit alpha and one subunit beta (chain A and B); hexosaminidase B is a homodimer of two beta subunits (two chains A and B); hexosaminidase S is a homodimer of two alpha subunits. The composition of the dimer (isozyme A versus isozyme S) has a significant effect on the substrate specificity of the alpha subunit active site.

It is found in the lysosome. Its subcellular location is the cytoplasmic vesicle. The protein resides in the secretory vesicle. The protein localises to the cortical granule. It catalyses the reaction Hydrolysis of terminal non-reducing N-acetyl-D-hexosamine residues in N-acetyl-beta-D-hexosaminides.. The catalysed reaction is N-acetyl-beta-D-galactosaminyl-(1-&gt;4)-beta-D-3-sulfogalactosyl-(1-&gt;4)-beta-D-glucosyl-(1&lt;-&gt;1')-ceramide + H2O = a beta-D-3-sulfogalactosyl-(1-&gt;4)-beta-D-glucosyl-(1&lt;-&gt;1')-ceramide + N-acetyl-beta-D-galactosamine. The enzyme catalyses a ganglioside GM2 (d18:1(4E)) + H2O = a ganglioside GM3 (d18:1(4E)) + N-acetyl-beta-D-galactosamine. It carries out the reaction a ganglioside GM2 + H2O = a ganglioside GM3 + N-acetyl-beta-D-galactosamine. It catalyses the reaction beta-D-GalNAc-(1-&gt;4)-alpha-L-IdoA-(1-&gt;3)-beta-D-GalNAc-4-sulfate-(1-&gt;4)-alpha-L-IdoA-(1-&gt;3)-D-GalNAc-4-sulfate + H2O = alpha-L-IdoA-(1-&gt;3)-beta-D-GalNAc-4-sulfate-(1-&gt;4)-alpha-L-IdoA-(1-&gt;3)-D-GalNAc-4-sulfate + N-acetyl-D-galactosamine. The catalysed reaction is N-acetyl-beta-D-6-sulfogalactosaminyl-(1-&gt;4)-alpha-L-iduronyl-(1-&gt;3)-N-acetyl-D-6-sulfogalactosamine + H2O = alpha-L-iduronyl-(1-&gt;3)-N-acetyl-D-6-sulfogalactosamine + N-acetyl-D-6-sulfogalactosamine. With respect to regulation, addition of GM2A stimulates the hydrolysis of sulfated glycosphingolipid SM2 and the ganglioside GM2. Hydrolyzes the non-reducing end N-acetyl-D-hexosamine and/or sulfated N-acetyl-D-hexosamine of glycoconjugates, such as the oligosaccharide moieties from proteins and neutral glycolipids, or from certain mucopolysaccharides. The isozyme B does not hydrolyze each of these substrates, however hydrolyzes efficiently neutral oligosaccharide. Only the isozyme A is responsible for the degradation of GM2 gangliosides in the presence of GM2A. During fertilization is responsible, at least in part, for the zona block to polyspermy. Present in the cortical granules of non-activated oocytes, is exocytosed during the cortical reaction in response to oocyte activation and inactivates the sperm galactosyltransferase-binding site, accounting for the block in sperm binding to the zona pellucida. The protein is Beta-hexosaminidase subunit beta of Sus scrofa (Pig).